Here is a 919-residue protein sequence, read N- to C-terminus: MLX-interacting protein (919 aa).

The tract at residues methionine 1–arginine 72 is disordered. Alanine 2 carries the N-acetylalanine modification. 4 positions are modified to phosphoserine: serine 9, serine 27, serine 33, and serine 39. The span at serine 27 to glutamate 37 shows a compositional bias: acidic residues. Positions serine 44–alanine 56 are enriched in low complexity. The required for cytoplasmic localization stretch occupies residues arginine 73–aspartate 327. Residues asparagine 322–proline 445 are transactivation domain. Disordered regions lie at residues lysine 542 to lysine 562 and aspartate 633 to lysine 712. Serine 669 is subject to Phosphoserine. Polar residues predominate over residues proline 670 to glycine 685. The span at glutamine 686 to serine 706 shows a compositional bias: low complexity. One can recognise a bHLH domain in the interval asparagine 719–leucine 769. The interval leucine 769–leucine 790 is leucine-zipper. Residues tryptophan 832–valine 881 form a mediates heterotypic interactions between MLXIP and MLX and is required for cytoplasmic localization region.

As to quaternary structure, efficient DNA binding requires dimerization with another bHLH protein. Binds DNA as a homodimer or a heterodimer with MLX. In terms of tissue distribution, widely expressed in adult tissues. Most abundant in skeletal muscle.

It localises to the cytoplasm. Its subcellular location is the nucleus. The protein localises to the mitochondrion outer membrane. Binds DNA as a heterodimer with MLX and activates transcription. Binds to the canonical E box sequence 5'-CACGTG-3'. Plays a role in transcriptional activation of glycolytic target genes. Involved in glucose-responsive gene regulation. The sequence is that of MLX-interacting protein from Homo sapiens (Human).